The following is a 72-amino-acid chain: uncharacterized protein (72 aa).

The helical transmembrane segment at 23–45 threads the bilayer; it reads ITNLLITTILLCFFNATTYWKLF.

Its subcellular location is the membrane. This is an uncharacterized protein from Schizosaccharomyces pombe (strain 972 / ATCC 24843) (Fission yeast).